The following is a 408-amino-acid chain: DNA polymerase processivity factor (408 aa).

The short motif at 344–353 is the Nuclear localization signal element; that stretch reads KKRRNLLTKR.

The protein belongs to the herpesviridae DNA polymerase processivity factor family. As to quaternary structure, interacts with the DNA polymerase catalytic subunit. Interacts with the origin-binding protein.

It localises to the host nucleus. Its function is as follows. Plays an essential role in viral DNA replication by acting as the polymerase accessory subunit. Associates with the viral polymerase to increase its processivity and forms high-affinity direct interactions with DNA. Facilitates the origin-binding protein loading onto DNA thus increasing its ability to assemble into a functional complex capable of unwinding duplex DNA. The protein is DNA polymerase processivity factor of Varicella-zoster virus (strain Oka vaccine) (HHV-3).